The chain runs to 430 residues: Trigger factor (430 aa).

A PPIase FKBP-type domain is found at 157 to 242 (GDLVALETWS…AVEVSEPVLP (86 aa)).

Belongs to the FKBP-type PPIase family. Tig subfamily.

The protein resides in the cytoplasm. It carries out the reaction [protein]-peptidylproline (omega=180) = [protein]-peptidylproline (omega=0). In terms of biological role, involved in protein export. Acts as a chaperone by maintaining the newly synthesized protein in an open conformation. Functions as a peptidyl-prolyl cis-trans isomerase. This chain is Trigger factor, found in Xanthomonas euvesicatoria pv. vesicatoria (strain 85-10) (Xanthomonas campestris pv. vesicatoria).